The primary structure comprises 358 residues: Aromatic amino acid aminotransferase (358 aa).

Lys214 bears the N6-(pyridoxal phosphate)lysine mark.

Belongs to the class-II pyridoxal-phosphate-dependent aminotransferase family. Homodimer. It depends on pyridoxal 5'-phosphate as a cofactor.

It carries out the reaction an aromatic L-alpha-amino acid + 2-oxoglutarate = an aromatic oxo-acid + L-glutamate. Its function is as follows. Aminotransferase that catalyzes the conversion of aromatic amino acids and 2-oxoglutarate into corresponding aromatic oxo acids and L-glutamate. The polypeptide is Aromatic amino acid aminotransferase (Rhodococcus erythropolis (strain PR4 / NBRC 100887)).